A 1758-amino-acid chain; its full sequence is Condensin-2 complex subunit hcp-6 (1758 aa).

Disordered stretches follow at residues 428-501 (DPGA…KAKE), 969-1008 (ENGS…KGGM), 1379-1460 (QKRL…ARLL), and 1500-1656 (SKQA…LSRG). Acidic residues predominate over residues 438-462 (EQNEEEDEEEEGEDEEEEEENEQDD). Residues 463–473 (VAVKEEEQSDK) show a composition bias toward basic and acidic residues. Residues 474–484 (SDEENDGDNEE) show a composition bias toward acidic residues. The span at 485–501 (NVSKKKEEKKKEKKAKE) shows a compositional bias: basic and acidic residues. Over residues 969 to 979 (ENGSSDASTVN) the composition is skewed to polar residues. Residues 999–1008 (SSQKSSKGGM) show a composition bias toward low complexity. The stretch at 1326-1385 (CIEHKNDIDEILQDNRQLKDEMMFELQRVKQRTEEANRILDEYLKRVAEFKKQQKRLSKS) forms a coiled coil. The span at 1414-1423 (EDQENVEEEV) shows a compositional bias: acidic residues. Composition is skewed to basic and acidic residues over residues 1424 to 1437 (EMRT…DADV) and 1500 to 1512 (SKQA…KTIV). Composition is skewed to polar residues over residues 1602-1618 (ISAN…QSTE) and 1640-1651 (VPTSSSGNTEND).

In terms of assembly, component of the condensin-2 complex.

The protein resides in the nucleus. It is found in the chromosome. It localises to the centromere. Its function is as follows. Chromosomal protein which is recruited to mitotic chromosomes by hcp-3 (CENP-A) and hcp-4 (CENP-C). Involved in chromosome segregation during mitosis, playing a role in chromosome condensation and in maintaining chromosome morphology, rigidity and orientation during mitosis. This chain is Condensin-2 complex subunit hcp-6, found in Caenorhabditis elegans.